An 873-amino-acid polypeptide reads, in one-letter code: DNA mismatch repair protein MutS (873 aa).

Residue 628–635 (GPNMAGKS) coordinates ATP.

Belongs to the DNA mismatch repair MutS family.

Its function is as follows. This protein is involved in the repair of mismatches in DNA. It is possible that it carries out the mismatch recognition step. This protein has a weak ATPase activity. The sequence is that of DNA mismatch repair protein MutS from Chlorobium chlorochromatii (strain CaD3).